The primary structure comprises 100 residues: Urease subunit gamma (100 aa).

This sequence belongs to the urease gamma subunit family. Heterotrimer of UreA (gamma), UreB (beta) and UreC (alpha) subunits. Three heterotrimers associate to form the active enzyme.

Its subcellular location is the cytoplasm. The enzyme catalyses urea + 2 H2O + H(+) = hydrogencarbonate + 2 NH4(+). Its pathway is nitrogen metabolism; urea degradation; CO(2) and NH(3) from urea (urease route): step 1/1. The protein is Urease subunit gamma of Ralstonia nicotianae (strain ATCC BAA-1114 / GMI1000) (Ralstonia solanacearum).